A 572-amino-acid chain; its full sequence is Dihydroxy-acid dehydratase (572 aa).

C57 provides a ligand contact to [2Fe-2S] cluster. Residue D89 participates in Mg(2+) binding. C130 is a [2Fe-2S] cluster binding site. D131 and K132 together coordinate Mg(2+). The residue at position 132 (K132) is an N6-carboxylysine. [2Fe-2S] cluster is bound at residue C202. Mg(2+) is bound at residue E453. S479 functions as the Proton acceptor in the catalytic mechanism.

Belongs to the IlvD/Edd family. Homodimer. The cofactor is [2Fe-2S] cluster. Mg(2+) serves as cofactor.

It catalyses the reaction (2R)-2,3-dihydroxy-3-methylbutanoate = 3-methyl-2-oxobutanoate + H2O. The catalysed reaction is (2R,3R)-2,3-dihydroxy-3-methylpentanoate = (S)-3-methyl-2-oxopentanoate + H2O. It participates in amino-acid biosynthesis; L-isoleucine biosynthesis; L-isoleucine from 2-oxobutanoate: step 3/4. Its pathway is amino-acid biosynthesis; L-valine biosynthesis; L-valine from pyruvate: step 3/4. Functions in the biosynthesis of branched-chain amino acids. Catalyzes the dehydration of (2R,3R)-2,3-dihydroxy-3-methylpentanoate (2,3-dihydroxy-3-methylvalerate) into 2-oxo-3-methylpentanoate (2-oxo-3-methylvalerate) and of (2R)-2,3-dihydroxy-3-methylbutanoate (2,3-dihydroxyisovalerate) into 2-oxo-3-methylbutanoate (2-oxoisovalerate), the penultimate precursor to L-isoleucine and L-valine, respectively. This is Dihydroxy-acid dehydratase from Streptococcus thermophilus (strain CNRZ 1066).